Reading from the N-terminus, the 308-residue chain is Ribosomal RNA large subunit methyltransferase F (308 aa).

It belongs to the methyltransferase superfamily. METTL16/RlmF family.

It is found in the cytoplasm. It carries out the reaction adenosine(1618) in 23S rRNA + S-adenosyl-L-methionine = N(6)-methyladenosine(1618) in 23S rRNA + S-adenosyl-L-homocysteine + H(+). Specifically methylates the adenine in position 1618 of 23S rRNA. In Salmonella arizonae (strain ATCC BAA-731 / CDC346-86 / RSK2980), this protein is Ribosomal RNA large subunit methyltransferase F.